A 1661-amino-acid chain; its full sequence is MSKTKNRNSLLSSHNRTSVSNSTKDELLAMKYVMDKPAIPLYPLNELSNSSESISEQNRYTSNSSTDELTYPDFKPWKDTTHLPKGKSEVEVEKLNNEAYLNKGYFEGPSVANEYYSARNLIQASLFSSSSNCDKVLKELSQHLVNSYRTRNEVINKIKYNSNKFKIPPRVTLTASKKEAWLRDLANPDEPLSNISNKLPHGIKNKMLVDILCSKNIPTSRALWLTKCVLYSELLVLKKKYQSRLPNNPHPVENTTSETFETQWLQEWTHQLVDYFYKFSKDMCNITIQEKKQVYLTKLNYLLNYVQALYIECLLDKSFFLTSILKFLKEGLPLDQSHVSELLAFSRSEGEESSLDKWLVDIDLNYGQRLISITLVKMFWKDILELDYLSKELSELLLLNYYFIERIPTYNTKSSNYSHKQNHTAALSSTLKLKLLSSISDTVNYLFKHNTNVFIIPNYWILVNETLYKILLSDVANSYDSEEQTEIRKQLKLIKYRNESLMLSMKDVQSSNFVDVNTARNLAKDRRRSNSLQQSLSQDTKNNYNSITGKKIPNTVENDNYFINRNSDDTLNIIDQLDRLKLNDTLAEMLIPSSISSSPDNFNDWRVNLKVVIYWAITIYREQMSSSEGILIICNFLKRKVLQNISVKNVNSIKAEFENEILEIIYNLAHCTDVDIIDYNLYVLINELYQLKVITISSYLRKLIASGLFYVSPSADGAQSHNENNSSVETHLAILQNLPVLNNKQCDSILRKWTPNGFNFEEKFEKGKLILKEELVDRLMSNSFDGYCDEKLTYIKNLKVGLKFLLVNWLTNYLKTSITKSPKLIHINPNIITSLYNFYALCDNLTVFFKVLIKFILRNEGKVIICYMDSLYLISKLIIRHFKLVKFIAGKSYESTTTGYELFKLIILNYKDLSTRDNDYYNFSDVWYFIDNAVEKNEPTYGKSSDGNNDNALKHKNFNQLLFAKETVDSPMRIHANSNTPQKNNDSYTATVFRNDLDLLLEAPIKLLNNTDITDFISTLELNVSNEAFNEISNTEESVIIIMEYYFKNIGEFTELHENLCMRLLINSKRSLDMTTRGIFFDIMKHFIINLVRTKPGIEKLITLFKKLMCFEVYQPHELFSTLRSILPRELSHEQMDALKYELLFGNPESDNKNLFNDQALVLRCIRYLYVKRHSNDVFITLLDSFSNEKETFFNSYALKAYNSKVLSFFRQFSISNTKFFMDGLSKVASNSDIISFLNLLIYISEEPIGSSSDLPRLASIIDEFNLPVCQVLIKIIIMNELRDSNKDKSIEKLRYILDMLLNNLKFHFVSYNSYFGELFNYLSWEHKLNILSIFEHNFLCNTEFIVSDDKFTENSVCLMSSDGRTNLLSILKDYFKKFSVSSLNTVTTSKEVFHNLSKFLLKVLQLANADIIGDSRRDAYNTISIFLRILIIHKLSLTSMIIEQDGQDLHFIKNLIALLESKFLCFNNEKLRILLYDLLLLMKSSITSSMILNPDSNLADDMTTDTSHQQHSPSNDYLSRSNPDGTEVGNSNSKYFGVSNISTIPNLSSVFNISEPNISYPLKKYTDDSKILCALMLEESELQKGGDIYALNDSKLILLPSRREALSSAFDILNETQQTVSKKRFKIESYELLEDTGIELNNGCINLSLFDAFTTKENPP.

3 disordered regions span residues 1-22, 524-550, and 1501-1527; these read MSKT…VSNS, KDRR…ITGK, and DDMT…PDGT. Polar residues-rich tracts occupy residues 7 to 22, 539 to 548, and 1505 to 1527; these read RNSL…VSNS, DTKNNYNSIT, and TDTS…PDGT.

Belongs to the Mediator complex subunit 12 family. In terms of assembly, component of the SRB8-11 complex, which itself associates with the Mediator complex.

The protein resides in the nucleus. Its function is as follows. Component of the SRB8-11 complex. The SRB8-11 complex is a regulatory module of the Mediator complex which is itself involved in regulation of basal and activated RNA polymerase II-dependent transcription. The SRB8-11 complex may be involved in the transcriptional repression of a subset of genes regulated by Mediator. It may inhibit the association of the Mediator complex with RNA polymerase II to form the holoenzyme complex. This Debaryomyces hansenii (strain ATCC 36239 / CBS 767 / BCRC 21394 / JCM 1990 / NBRC 0083 / IGC 2968) (Yeast) protein is Mediator of RNA polymerase II transcription subunit 12 (SRB8).